The chain runs to 716 residues: 1,4-alpha-glucan branching enzyme GlgB (716 aa).

Asp-398 serves as the catalytic Nucleophile. The active-site Proton donor is Glu-451.

The protein belongs to the glycosyl hydrolase 13 family. GlgB subfamily. Monomer.

The catalysed reaction is Transfers a segment of a (1-&gt;4)-alpha-D-glucan chain to a primary hydroxy group in a similar glucan chain.. Its pathway is glycan biosynthesis; glycogen biosynthesis. Catalyzes the formation of the alpha-1,6-glucosidic linkages in glycogen by scission of a 1,4-alpha-linked oligosaccharide from growing alpha-1,4-glucan chains and the subsequent attachment of the oligosaccharide to the alpha-1,6 position. The polypeptide is 1,4-alpha-glucan branching enzyme GlgB (Nitrobacter hamburgensis (strain DSM 10229 / NCIMB 13809 / X14)).